The primary structure comprises 204 residues: LexA repressor (204 aa).

The segment at residues 27 to 47 (VREIGEAVGLASSSTVHGHLA) is a DNA-binding region (H-T-H motif). Active-site for autocatalytic cleavage activity residues include Ser126 and Lys164.

Belongs to the peptidase S24 family. As to quaternary structure, homodimer.

The enzyme catalyses Hydrolysis of Ala-|-Gly bond in repressor LexA.. In terms of biological role, represses a number of genes involved in the response to DNA damage (SOS response), including recA and lexA. In the presence of single-stranded DNA, RecA interacts with LexA causing an autocatalytic cleavage which disrupts the DNA-binding part of LexA, leading to derepression of the SOS regulon and eventually DNA repair. In Listeria welshimeri serovar 6b (strain ATCC 35897 / DSM 20650 / CCUG 15529 / CIP 8149 / NCTC 11857 / SLCC 5334 / V8), this protein is LexA repressor.